Consider the following 231-residue polypeptide: 7-cyano-7-deazaguanine synthase (231 aa).

11–21 (LSGGLDSATTM) lines the ATP pocket. Zn(2+) contacts are provided by Cys195, Cys205, Cys208, and Cys211.

This sequence belongs to the QueC family. The cofactor is Zn(2+).

The enzyme catalyses 7-carboxy-7-deazaguanine + NH4(+) + ATP = 7-cyano-7-deazaguanine + ADP + phosphate + H2O + H(+). The protein operates within purine metabolism; 7-cyano-7-deazaguanine biosynthesis. Functionally, catalyzes the ATP-dependent conversion of 7-carboxy-7-deazaguanine (CDG) to 7-cyano-7-deazaguanine (preQ(0)). In Syntrophus aciditrophicus (strain SB), this protein is 7-cyano-7-deazaguanine synthase.